Consider the following 385-residue polypeptide: Acetate kinase (385 aa).

Asn-8 lines the Mg(2+) pocket. An ATP-binding site is contributed by Lys-15. Arg-85 is a substrate binding site. Asp-142 acts as the Proton donor/acceptor in catalysis. Residues His-200–Gly-204, Asp-275–Arg-277, and Gly-323–Asn-327 contribute to the ATP site. Position 373 (Glu-373) interacts with Mg(2+).

Belongs to the acetokinase family. As to quaternary structure, homodimer. Mg(2+) serves as cofactor. Mn(2+) is required as a cofactor.

Its subcellular location is the cytoplasm. It catalyses the reaction acetate + ATP = acetyl phosphate + ADP. The protein operates within metabolic intermediate biosynthesis; acetyl-CoA biosynthesis; acetyl-CoA from acetate: step 1/2. Catalyzes the formation of acetyl phosphate from acetate and ATP. Can also catalyze the reverse reaction. This is Acetate kinase from Francisella tularensis subsp. holarctica (strain OSU18).